The sequence spans 241 residues: Large ribosomal subunit protein eL32 (241 aa).

The span at 1–16 shows a compositional bias: acidic residues; the sequence is MADNEEDVEAEEEYTE. Disordered regions lie at residues 1 to 47 and 68 to 182; these read MADN…GADQ and VGGL…HPSG. Residues 29–44 are compositionally biased toward basic and acidic residues; sequence ESLREAGFESVEDVRG. Over residues 73–96 the composition is skewed to acidic residues; sequence VESETEAEVEEEGGEEAPDEDVET. Positions 103 to 116 are enriched in basic and acidic residues; sequence LTEKTPDLSDEDAR. Residues 133–159 are compositionally biased toward basic residues; the sequence is DHHKKKRVSTSWRKPRGQLSKQRRGIK.

It belongs to the eukaryotic ribosomal protein eL32 family. As to quaternary structure, part of the 50S ribosomal subunit. Interacts weakly with protein L15.

Its function is as follows. Binds to the 23S rRNA. The sequence is that of Large ribosomal subunit protein eL32 (rpl32e) from Haloarcula marismortui (strain ATCC 43049 / DSM 3752 / JCM 8966 / VKM B-1809) (Halobacterium marismortui).